The chain runs to 543 residues: Cobyric acid synthase (543 aa).

One can recognise a GATase cobBQ-type domain in the interval 260–483; that stretch reads MLDIVLVDLP…LHGVFDADGF (224 aa). Catalysis depends on C346, which acts as the Nucleophile. Residue H475 is part of the active site.

This sequence belongs to the CobB/CobQ family. CobQ subfamily.

The protein operates within cofactor biosynthesis; adenosylcobalamin biosynthesis. Catalyzes amidations at positions B, D, E, and G on adenosylcobyrinic A,C-diamide. NH(2) groups are provided by glutamine, and one molecule of ATP is hydrogenolyzed for each amidation. This is Cobyric acid synthase from Nitratidesulfovibrio vulgaris (strain ATCC 29579 / DSM 644 / CCUG 34227 / NCIMB 8303 / VKM B-1760 / Hildenborough) (Desulfovibrio vulgaris).